A 297-amino-acid chain; its full sequence is MTRRLLLVHAHPDDETITTGGTIARYLSEGAEVTVVTCTLGEEGEVMDPPYAQLVADQADQLGGYRIAELTRALAALSEPAGPVLRPRFLGGAGRWRDSGMAGTPAADHPRAFASADRIAADGPVALLAGIIRELRPQVVVTYDQVGGYGHPDHIAAHTVTTAAVDAAAASGLPGEQWAVAKLYWTVAGRGQIDRGVAAFAETELPGDWSVPESASLPAHDDAALTALIDTRDVAGRKVAALRAHATQLAVAPCGTAFALTNLIAQPVLTEEAYILVRGTAAPGPDGLERDLFAGLE.

Residues His11, Asp14, and His154 each contribute to the Zn(2+) site.

Belongs to the MshB deacetylase family. The cofactor is Zn(2+).

The catalysed reaction is 1D-myo-inositol 2-acetamido-2-deoxy-alpha-D-glucopyranoside + H2O = 1D-myo-inositol 2-amino-2-deoxy-alpha-D-glucopyranoside + acetate. Catalyzes the deacetylation of 1D-myo-inositol 2-acetamido-2-deoxy-alpha-D-glucopyranoside (GlcNAc-Ins) in the mycothiol biosynthesis pathway. This Tsukamurella paurometabola (strain ATCC 8368 / DSM 20162 / CCUG 35730 / CIP 100753 / JCM 10117 / KCTC 9821 / NBRC 16120 / NCIMB 702349 / NCTC 13040) (Corynebacterium paurometabolum) protein is 1D-myo-inositol 2-acetamido-2-deoxy-alpha-D-glucopyranoside deacetylase.